Here is a 254-residue protein sequence, read N- to C-terminus: 3-deoxy-manno-octulosonate cytidylyltransferase (254 aa).

It belongs to the KdsB family.

Its subcellular location is the cytoplasm. It carries out the reaction 3-deoxy-alpha-D-manno-oct-2-ulosonate + CTP = CMP-3-deoxy-beta-D-manno-octulosonate + diphosphate. It functions in the pathway nucleotide-sugar biosynthesis; CMP-3-deoxy-D-manno-octulosonate biosynthesis; CMP-3-deoxy-D-manno-octulosonate from 3-deoxy-D-manno-octulosonate and CTP: step 1/1. The protein operates within bacterial outer membrane biogenesis; lipopolysaccharide biosynthesis. In terms of biological role, activates KDO (a required 8-carbon sugar) for incorporation into bacterial lipopolysaccharide in Gram-negative bacteria. The polypeptide is 3-deoxy-manno-octulosonate cytidylyltransferase (Pseudomonas aeruginosa (strain LESB58)).